We begin with the raw amino-acid sequence, 156 residues long: ATP synthase subunit b (156 aa).

The helical transmembrane segment at 12-32 (IAFAIFVLFCMKFIWPALMGA) threads the bilayer.

Belongs to the ATPase B chain family. F-type ATPases have 2 components, F(1) - the catalytic core - and F(0) - the membrane proton channel. F(1) has five subunits: alpha(3), beta(3), gamma(1), delta(1), epsilon(1). F(0) has three main subunits: a(1), b(2) and c(10-14). The alpha and beta chains form an alternating ring which encloses part of the gamma chain. F(1) is attached to F(0) by a central stalk formed by the gamma and epsilon chains, while a peripheral stalk is formed by the delta and b chains.

The protein resides in the cell inner membrane. In terms of biological role, f(1)F(0) ATP synthase produces ATP from ADP in the presence of a proton or sodium gradient. F-type ATPases consist of two structural domains, F(1) containing the extramembraneous catalytic core and F(0) containing the membrane proton channel, linked together by a central stalk and a peripheral stalk. During catalysis, ATP synthesis in the catalytic domain of F(1) is coupled via a rotary mechanism of the central stalk subunits to proton translocation. Component of the F(0) channel, it forms part of the peripheral stalk, linking F(1) to F(0). The protein is ATP synthase subunit b of Psychrobacter sp. (strain PRwf-1).